We begin with the raw amino-acid sequence, 183 residues long: Ribulose bisphosphate carboxylase small subunit, chloroplastic 3 (183 aa).

Residues 1–57 (MASSLMSNAATTMAAATTTAQANMVAPFNGLKSVSAFPVTRKNNDITSVASNGGRVQ) constitute a chloroplast transit peptide.

The protein belongs to the RuBisCO small chain family. Heterohexadecamer of 8 large and 8 small subunits.

The protein resides in the plastid. It localises to the chloroplast. RuBisCO catalyzes two reactions: the carboxylation of D-ribulose 1,5-bisphosphate, the primary event in carbon dioxide fixation, as well as the oxidative fragmentation of the pentose substrate. Both reactions occur simultaneously and in competition at the same active site. Although the small subunit is not catalytic it is essential for maximal activity. This chain is Ribulose bisphosphate carboxylase small subunit, chloroplastic 3, found in Mesembryanthemum crystallinum (Common ice plant).